A 122-amino-acid chain; its full sequence is MIQMQSYLDVADNSGAKEVMCIKVLGGSKRRYARIGDIIKVTVKDAIPRGKVKKGEVYDAVVVRTRKGVRRADGSLIRFDGNAAVLLNNKQEPIGTRIFGPVTRELRSEKFMKIVSLAPEVL.

It belongs to the universal ribosomal protein uL14 family. As to quaternary structure, part of the 50S ribosomal subunit. Forms a cluster with proteins L3 and L19. In the 70S ribosome, L14 and L19 interact and together make contacts with the 16S rRNA in bridges B5 and B8.

In terms of biological role, binds to 23S rRNA. Forms part of two intersubunit bridges in the 70S ribosome. In Xanthomonas oryzae pv. oryzae (strain MAFF 311018), this protein is Large ribosomal subunit protein uL14.